The sequence spans 369 residues: Uroporphyrinogen decarboxylase (369 aa).

Substrate-binding positions include 28 to 32 (RQAGR), aspartate 78, tyrosine 154, serine 209, and histidine 339.

It belongs to the uroporphyrinogen decarboxylase family. Homodimer.

The protein resides in the cytoplasm. It carries out the reaction uroporphyrinogen III + 4 H(+) = coproporphyrinogen III + 4 CO2. The protein operates within porphyrin-containing compound metabolism; protoporphyrin-IX biosynthesis; coproporphyrinogen-III from 5-aminolevulinate: step 4/4. Its function is as follows. Catalyzes the decarboxylation of four acetate groups of uroporphyrinogen-III to yield coproporphyrinogen-III. This is Uroporphyrinogen decarboxylase from Polaromonas sp. (strain JS666 / ATCC BAA-500).